The chain runs to 332 residues: Fructose-1,6-bisphosphatase class 1 (332 aa).

Glu94, Asp116, Leu118, and Asp119 together coordinate Mg(2+). Residues 119–122, Asn211, Tyr239, 257–259, and Lys269 contribute to the substrate site; these read DGSS and YLY. Glu275 is a binding site for Mg(2+).

This sequence belongs to the FBPase class 1 family. Homotetramer. Mg(2+) serves as cofactor.

The protein localises to the cytoplasm. The catalysed reaction is beta-D-fructose 1,6-bisphosphate + H2O = beta-D-fructose 6-phosphate + phosphate. Its pathway is carbohydrate biosynthesis; Calvin cycle. This Synechococcus sp. (strain JA-2-3B'a(2-13)) (Cyanobacteria bacterium Yellowstone B-Prime) protein is Fructose-1,6-bisphosphatase class 1.